The following is a 411-amino-acid chain: LL-diaminopimelate aminotransferase (411 aa).

2 residues coordinate substrate: Tyr-15 and Gly-42. Pyridoxal 5'-phosphate contacts are provided by residues Tyr-72, 108–109 (SK), Tyr-132, Asn-187, Tyr-218, and 246–248 (SFS). Residues Lys-109, Tyr-132, and Asn-187 each contribute to the substrate site. An N6-(pyridoxal phosphate)lysine modification is found at Lys-249. Pyridoxal 5'-phosphate-binding residues include Arg-257 and Asn-292. Residues Asn-292 and Arg-388 each contribute to the substrate site.

It belongs to the class-I pyridoxal-phosphate-dependent aminotransferase family. LL-diaminopimelate aminotransferase subfamily. In terms of assembly, homodimer. Requires pyridoxal 5'-phosphate as cofactor.

The catalysed reaction is (2S,6S)-2,6-diaminopimelate + 2-oxoglutarate = (S)-2,3,4,5-tetrahydrodipicolinate + L-glutamate + H2O + H(+). It participates in amino-acid biosynthesis; L-lysine biosynthesis via DAP pathway; LL-2,6-diaminopimelate from (S)-tetrahydrodipicolinate (aminotransferase route): step 1/1. Its function is as follows. Involved in the synthesis of meso-diaminopimelate (m-DAP or DL-DAP), required for both lysine and peptidoglycan biosynthesis. Catalyzes the direct conversion of tetrahydrodipicolinate to LL-diaminopimelate. The sequence is that of LL-diaminopimelate aminotransferase from Synechococcus sp. (strain JA-3-3Ab) (Cyanobacteria bacterium Yellowstone A-Prime).